The sequence spans 835 residues: Cap-specific mRNA (nucleoside-2'-O-)-methyltransferase 1 (835 aa).

The Bipartite nuclear localization signal signature appears at 2–19 (RRRNDPECTAPIKKQKKR). The segment at 24 to 68 (ALNLSAASGDEPPSSVNHAAKASTTSLSGSDSETEGKQHGSDSFD) is disordered. Residues S28, S31, S53, S66, and S91 each carry the phosphoserine modification. The span at 37-54 (SSVNHAAKASTTSLSGSD) shows a compositional bias: polar residues. Residues 57 to 68 (TEGKQHGSDSFD) are compositionally biased toward basic and acidic residues. The region spanning 87–133 (YNSVSQKLMAKMGFREGEGLGKYSQGRKDIVEASNQKGRRGLGLTLQ) is the G-patch domain. K108 bears the N6-acetyllysine mark. Substrate is bound by residues 203 to 207 (KSVFD) and R218. The region spanning 231-450 (FFLNRAAMKM…ERYVVCKGLK (220 aa)) is the RrmJ-type SAM-dependent 2'-O-MTase domain. N234 contacts S-adenosyl-L-methionine. K239 is a catalytic residue. Residues 277-283 (CAGPGGF) and 335-336 (DI) each bind S-adenosyl-L-methionine. The active site involves D364. Residue 374–376 (NLQ) participates in substrate binding. The Proton acceptor role is filled by K404. Position 439 (N439) interacts with substrate. Residues 727 to 835 (SSGTPKLSYT…VLSFIQTHSA (109 aa)) are interaction with POLR2A. The 35-residue stretch at 752-786 (RTVNEPWTMGFSKSFKRKFFYNKKTKISTFDLPAD) folds into the WW domain.

As to quaternary structure, interacts with POLR2A (via C-terminus).

The protein localises to the nucleus. It carries out the reaction a 5'-end (N(7)-methyl 5'-triphosphoguanosine)-ribonucleoside in mRNA + S-adenosyl-L-methionine = a 5'-end (N(7)-methyl 5'-triphosphoguanosine)-(2'-O-methyl-ribonucleoside) in mRNA + S-adenosyl-L-homocysteine + H(+). Functionally, S-adenosyl-L-methionine-dependent methyltransferase that mediates mRNA cap1 2'-O-ribose methylation to the 5'-cap structure of mRNAs. Methylates the ribose of the first nucleotide of a m(7)GpppG-capped mRNA and small nuclear RNA (snRNA) to produce m(7)GpppRm (cap1). Displays a preference for cap0 transcripts. Cap1 modification is linked to higher levels of translation. May be involved in the interferon response pathway. The chain is Cap-specific mRNA (nucleoside-2'-O-)-methyltransferase 1 (CMTR1) from Ailuropoda melanoleuca (Giant panda).